A 324-amino-acid chain; its full sequence is Dolichyl-phosphate beta-glucosyltransferase (324 aa).

The Lumenal portion of the chain corresponds to 1–7 (MATLLLQ). Residues 8-28 (LLGLGVALAAAALILVSIVAF) form a helical membrane-spanning segment. Topologically, residues 29–324 (ITATKMPPCY…WRLKQTRKAS (296 aa)) are cytoplasmic.

It belongs to the glycosyltransferase 2 family.

The protein localises to the endoplasmic reticulum membrane. It carries out the reaction a di-trans,poly-cis-dolichyl phosphate + UDP-alpha-D-glucose = a di-trans,poly-cis-dolichyl beta-D-glucosyl phosphate + UDP. It participates in protein modification; protein glycosylation. Functionally, dolichyl-phosphate beta-glucosyltransferase that operates in the biosynthetic pathway of dolichol-linked oligosaccharides, the glycan precursors employed in protein asparagine (N)-glycosylation. The assembly of dolichol-linked oligosaccharides begins on the cytosolic side of the endoplasmic reticulum membrane and finishes in its lumen. The sequential addition of sugars to dolichol pyrophosphate produces dolichol-linked oligosaccharides containing fourteen sugars, including two GlcNAcs, nine mannoses and three glucoses. Once assembled, the oligosaccharide is transferred from the lipid to nascent proteins by oligosaccharyltransferases. Dolichyl-phosphate beta-glucosyltransferase produces dolichyl beta-D-glucosyl phosphate/Dol-P-Glc, the glucose donor substrate used sequentially by ALG6, ALG8 and ALG10 to add glucose residues on top of the Man(9)GlcNAc(2)-PP-Dol structure. These are the three last steps in the biosynthetic pathway of dolichol-linked oligosaccharides to produce Glc(3)Man(9)GlcNAc(2)-PP-Dol. The enzyme is most probably active on the cytoplasmic side of the endoplasmic reticulum while its product Dol-P-Glc is the substrate for ALG6, ALG8 and ALG11 in the lumen of the endoplasmic reticulum. This chain is Dolichyl-phosphate beta-glucosyltransferase, found in Mus musculus (Mouse).